The primary structure comprises 62 residues: Large ribosomal subunit protein bL28 (62 aa).

This sequence belongs to the bacterial ribosomal protein bL28 family.

The protein is Large ribosomal subunit protein bL28 of Streptococcus agalactiae serotype Ia (strain ATCC 27591 / A909 / CDC SS700).